We begin with the raw amino-acid sequence, 85 residues long: Cell division topological specificity factor (85 aa).

It belongs to the MinE family.

In terms of biological role, prevents the cell division inhibition by proteins MinC and MinD at internal division sites while permitting inhibition at polar sites. This ensures cell division at the proper site by restricting the formation of a division septum at the midpoint of the long axis of the cell. The sequence is that of Cell division topological specificity factor from Chromobacterium violaceum (strain ATCC 12472 / DSM 30191 / JCM 1249 / CCUG 213 / NBRC 12614 / NCIMB 9131 / NCTC 9757 / MK).